The sequence spans 135 residues: UPF0251 protein Hore_18270 (135 aa).

The protein belongs to the UPF0251 family.

In Halothermothrix orenii (strain H 168 / OCM 544 / DSM 9562), this protein is UPF0251 protein Hore_18270.